The following is a 278-amino-acid chain: MSTITAAEVNKLRTMTGAGMMDCKKALTESGGDFEAAIDILRKKGQKVSAARAENTTSEGIVSITVSADGKNGKLVALACETEPVSKVADFKNLSEAIMAVAVAKKPATTEELSALPLADGRTVQEHIIDLTGKIGEKVTITSYVSMDGEQVVPYIHSNGKLGVMVALKNTGGKDCSEAGRDVAMQAAAMKPVALDKDDVDPKTVEREIEIGKEQARAEGKPEAMLEKIALGKLNKFYKDATLLNQEFVKDNSKSISQMLDGFHKGLTVSAFVRISLS.

The tract at residues 82–85 (TEPV) is involved in Mg(2+) ion dislocation from EF-Tu.

This sequence belongs to the EF-Ts family.

The protein resides in the cytoplasm. Associates with the EF-Tu.GDP complex and induces the exchange of GDP to GTP. It remains bound to the aminoacyl-tRNA.EF-Tu.GTP complex up to the GTP hydrolysis stage on the ribosome. The chain is Elongation factor Ts from Cytophaga hutchinsonii (strain ATCC 33406 / DSM 1761 / CIP 103989 / NBRC 15051 / NCIMB 9469 / D465).